A 769-amino-acid polypeptide reads, in one-letter code: Serine protease HtrA-like (769 aa).

A compositionally biased stretch (basic residues) spans 1–20; it reads MDIGKKHVIPKSQYRRKRRE. The disordered stretch occupies residues 1–388; it reads MDIGKKHVIP…KKATSKLNKG (388 aa). Basic and acidic residues-rich tracts occupy residues 21–64, 71–87, and 96–108; these read FFHN…ERFK, LEQR…EESK, and YNKD…DVSK. Residues 126–139 show a composition bias toward polar residues; it reads YEQNTEATLSTNST. Over residues 140–186 the composition is skewed to basic and acidic residues; it reads DKVESTDMRKLSSDKNKVGHEEQHVLSKPSEHDKETRIDFESSRTDS. Residues 247-262 show a composition bias toward polar residues; sequence QQSQNEQTKTYTYGDS. Composition is skewed to basic and acidic residues over residues 264–296 and 310–330; these read QNDK…HIVD and KIDD…HKQN. Over residues 331–347 the composition is skewed to polar residues; that stretch reads ADSSETVGYQSQSSASH. Residues 348–364 show a composition bias toward basic and acidic residues; that stretch reads RSTEKRNMAINDHDKLN. Residues 366–388 are compositionally biased toward polar residues; it reads QKPNTKTSANNNQKKATSKLNKG. The chain crosses the membrane as a helical span at residues 410 to 430; sequence LVILMGIIILIVILNAIFNNV. Catalysis depends on charge relay system residues His504, Asp534, and Ser619. Residues 680–733 enclose the PDZ domain; the sequence is IASLNSFERQAVKLLGKVKNGVVVDQVDNNGLADQSGLKKGDVITELDGKLLED.

It belongs to the peptidase S1C family.

It is found in the cell membrane. This Staphylococcus aureus (strain MRSA252) protein is Serine protease HtrA-like.